Here is a 72-residue protein sequence, read N- to C-terminus: Heat-stable enterotoxin A3/A4 (72 aa).

The signal sequence occupies residues methionine 1–alanine 19. The propeptide occupies glutamine 20–methionine 53. Intrachain disulfides connect cysteine 59–cysteine 64, cysteine 60–cysteine 68, and cysteine 63–cysteine 71.

Belongs to the heat-stable enterotoxin family.

The protein localises to the secreted. Its function is as follows. Toxin which activates the particulate form of guanylate cyclase and increases cyclic GMP levels within the host intestinal epithelial cells. The protein is Heat-stable enterotoxin A3/A4 (sta3) of Escherichia coli.